The primary structure comprises 721 residues: Protein mu-NS (721 aa).

The interaction with sigma-NS stretch occupies residues 1–13 (MASFKGFSVNTVP). The tract at residues 1-38 (MASFKGFSVNTVPVSKAKRDISSLAATPGIRSQPFTPS) is RNA-binding. The segment at 14 to 40 (VSKAKRDISSLAATPGIRSQPFTPSVD) is interaction with mu-2. Positions 471–721 (SSDMVDGIKL…IDFSVPTDEL (251 aa)) are involved in the formation of factory-like inclusions. Coiled-coil stretches lie at residues 523–560 (LLSQLRELSSEVTRLQMELSRTQSLNAQLEADAKSAQA) and 628–686 (QMNG…NQRQ).

This sequence belongs to the orthoreovirus mu-NS protein family. As to quaternary structure, interacts with mu-2. Interacts with sigma-NS; in viral factories. Interacts with the inner capsid proteins lambda-1 and sigma-2, and outer capsid protein lambda-2; in viral factories. Post-translationally, the N-terminus is blocked.

It localises to the host cytoplasm. Its function is as follows. Non-structural protein implicated with protein sigma-NS in forming the matrix of viral factories, which are large inclusions in the host cytoplasm where replication intermediates are assembled and viral RNA replication takes place. Together with mu-2, recruits the other core proteins to these factories. The polypeptide is Protein mu-NS (M3) (Mammalia (T1L)).